The chain runs to 89 residues: DNA/RNA-binding protein Alba 2 (89 aa).

It belongs to the histone-like Alba family. In terms of assembly, forms homodimers and homotetramers. Interacts with Alba 1.

Its subcellular location is the cytoplasm. The protein resides in the chromosome. Its function is as follows. Binds double-stranded DNA tightly but without sequence specificity. Involved in DNA compaction. This Archaeoglobus fulgidus (strain ATCC 49558 / DSM 4304 / JCM 9628 / NBRC 100126 / VC-16) protein is DNA/RNA-binding protein Alba 2.